The chain runs to 236 residues: Purine nucleoside phosphorylase (236 aa).

Position 5 (His5) interacts with a purine D-ribonucleoside. Residues Gly21, Arg25, Arg43, and 86–89 each bind phosphate; that span reads RYGT. Residues Glu163, 180-182, and 204-205 each bind a purine D-ribonucleoside; these read EME and SD.

This sequence belongs to the PNP/UDP phosphorylase family. As to quaternary structure, homohexamer; disulfide-linked. Trimer of homodimers, with three symmetric intersubunit disulfide bonds linking the dimers to one another.

The catalysed reaction is S-methyl-5'-thioadenosine + phosphate = 5-(methylsulfanyl)-alpha-D-ribose 1-phosphate + adenine. The enzyme catalyses a purine D-ribonucleoside + phosphate = a purine nucleobase + alpha-D-ribose 1-phosphate. It catalyses the reaction a purine 2'-deoxy-D-ribonucleoside + phosphate = a purine nucleobase + 2-deoxy-alpha-D-ribose 1-phosphate. The protein operates within purine metabolism; purine nucleoside salvage. Its function is as follows. Cleavage of guanosine or inosine to respective bases and sugar-1-phosphate molecules. Cleaves inosine, guanosine, and adenosine with a better efficiency than MTA. This chain is Purine nucleoside phosphorylase, found in Saccharolobus solfataricus (strain ATCC 35092 / DSM 1617 / JCM 11322 / P2) (Sulfolobus solfataricus).